The primary structure comprises 266 residues: Interleukin-33 (266 aa).

Residues 1-67 are homeodomain-like HTH domain; it reads MRPRMKYSNS…ETSYFRKEPT (67 aa). The propeptide occupies 1–101; the sequence is MRPRMKYSNS…RSLLGSIQAF (101 aa). The interaction with RELA stretch occupies residues 66–108; the sequence is PTKRYSLKSGTKHEENFSAYPRDSRKRSLLGSIQAFAASVDTL.

This sequence belongs to the IL-1 family. Highly divergent. (Microbial infection) Interacts (in reduced form) with H.polygyrus ARI; the interaction abolishes the interaction with its primary receptor IL1RL1. In terms of assembly, forms a 1:1:1 heterotrimeric complex with its primary high-affinity receptor IL1RL1 and the coreceptor IL1RAP. Interacts with cargo receptor TMED10; the interaction mediates the translocation from the cytoplasm into the ERGIC (endoplasmic reticulum-Golgi intermediate compartment) and thereby secretion. The full-length protein can be released from cells and is able to signal via the IL1RL1/ST2 receptor. However, proteolytic processing by CELA1, CSTG/cathepsin G and ELANE/neutrophil elastase produces C-terminal peptides that are more active than the unprocessed full-length protein. May also be proteolytically processed by calpains. Proteolytic cleavage mediated by apoptotic caspases including CASP3 and CASP7 results in IL33 inactivation. In vitro proteolytic cleavage by CASP1 was reported but could not be confirmed in vivo suggesting that IL33 is probably not a direct substrate for that caspase.

The protein resides in the nucleus. Its subcellular location is the chromosome. It is found in the cytoplasm. The protein localises to the cytoplasmic vesicle. It localises to the secretory vesicle. The protein resides in the secreted. Its function is as follows. Cytokine that binds to and signals through the IL1RL1/ST2 receptor which in turn activates NF-kappa-B and MAPK signaling pathways in target cells. Involved in the maturation of Th2 cells inducing the secretion of T-helper type 2-associated cytokines. Also involved in activation of mast cells, basophils, eosinophils and natural killer cells. Acts as an enhancer of polarization of alternatively activated macrophages. Acts as a chemoattractant for Th2 cells, and may function as an 'alarmin', that amplifies immune responses during tissue injury. Induces rapid UCP2-dependent mitochondrial rewiring that attenuates the generation of reactive oxygen species and preserves the integrity of Krebs cycle required for persistent production of itaconate and subsequent GATA3-dependent differentiation of inflammation-resolving alternatively activated macrophages. In quiescent endothelia the uncleaved form is constitutively and abundantly expressed, and acts as a chromatin-associated nuclear factor with transcriptional repressor properties, it may sequester nuclear NF-kappaB/RELA, lowering expression of its targets. This form is rapidely lost upon angiogenic or pro-inflammatory activation. This chain is Interleukin-33, found in Mus musculus (Mouse).